We begin with the raw amino-acid sequence, 101 residues long: Small ribosomal subunit protein uS14 (101 aa).

Belongs to the universal ribosomal protein uS14 family. In terms of assembly, part of the 30S ribosomal subunit. Contacts proteins S3 and S10.

Functionally, binds 16S rRNA, required for the assembly of 30S particles and may also be responsible for determining the conformation of the 16S rRNA at the A site. The polypeptide is Small ribosomal subunit protein uS14 (Chlamydia trachomatis serovar L2 (strain ATCC VR-902B / DSM 19102 / 434/Bu)).